The following is a 320-amino-acid chain: o-succinylbenzoate synthase (320 aa).

The Proton donor role is filled by Lys-133. Residues Asp-161, Glu-190, and Asp-213 each coordinate Mg(2+). Lys-235 acts as the Proton acceptor in catalysis.

The protein belongs to the mandelate racemase/muconate lactonizing enzyme family. MenC type 1 subfamily. A divalent metal cation serves as cofactor.

The enzyme catalyses (1R,6R)-6-hydroxy-2-succinyl-cyclohexa-2,4-diene-1-carboxylate = 2-succinylbenzoate + H2O. The protein operates within quinol/quinone metabolism; 1,4-dihydroxy-2-naphthoate biosynthesis; 1,4-dihydroxy-2-naphthoate from chorismate: step 4/7. Its pathway is quinol/quinone metabolism; menaquinone biosynthesis. Functionally, converts 2-succinyl-6-hydroxy-2,4-cyclohexadiene-1-carboxylate (SHCHC) to 2-succinylbenzoate (OSB). The sequence is that of o-succinylbenzoate synthase from Shigella flexneri.